Here is a 555-residue protein sequence, read N- to C-terminus: Beta-fructofuranosidase, cell wall isozyme (555 aa).

The signal sequence occupies residues 1 to 22 (MAISSIFLLSLFSLIYVIPIEA). Residues 58 to 61 (WIND), Gln77, Trp85, and 120 to 121 (WS) each bind substrate. Residue Asp61 is part of the active site. Residue Asp140 is part of the active site. Residues Asn154 and Asn181 are each glycosylated (N-linked (GlcNAc...) asparagine). Residues 186–187 (RD), Glu241, and Asp277 each bind substrate. An N-linked (GlcNAc...) asparagine glycan is attached at Asn337. Cysteines 435 and 481 form a disulfide.

It belongs to the glycosyl hydrolase 32 family.

The enzyme catalyses Hydrolysis of terminal non-reducing beta-D-fructofuranoside residues in beta-D-fructofuranosides.. The chain is Beta-fructofuranosidase, cell wall isozyme (BFRUCT1) from Pisum sativum (Garden pea).